The primary structure comprises 212 residues: Spore germination lipase LipC (212 aa).

The active-site Nucleophile is the Ser-11. Residues Gly-50 and Asn-82 each contribute to the substrate site. Residues Asp-186 and His-189 contribute to the active site.

Belongs to the 'GDSL' lipolytic enzyme family.

It is found in the spore coat. In terms of biological role, lipase involved in spore germination. The polypeptide is Spore germination lipase LipC (lipC) (Bacillus licheniformis (strain ATCC 14580 / DSM 13 / JCM 2505 / CCUG 7422 / NBRC 12200 / NCIMB 9375 / NCTC 10341 / NRRL NRS-1264 / Gibson 46)).